The primary structure comprises 565 residues: Proline--tRNA ligase (565 aa).

Belongs to the class-II aminoacyl-tRNA synthetase family. ProS type 1 subfamily. As to quaternary structure, homodimer.

It localises to the cytoplasm. The catalysed reaction is tRNA(Pro) + L-proline + ATP = L-prolyl-tRNA(Pro) + AMP + diphosphate. Functionally, catalyzes the attachment of proline to tRNA(Pro) in a two-step reaction: proline is first activated by ATP to form Pro-AMP and then transferred to the acceptor end of tRNA(Pro). As ProRS can inadvertently accommodate and process non-cognate amino acids such as alanine and cysteine, to avoid such errors it has two additional distinct editing activities against alanine. One activity is designated as 'pretransfer' editing and involves the tRNA(Pro)-independent hydrolysis of activated Ala-AMP. The other activity is designated 'posttransfer' editing and involves deacylation of mischarged Ala-tRNA(Pro). The misacylated Cys-tRNA(Pro) is not edited by ProRS. This Francisella tularensis subsp. novicida (strain U112) protein is Proline--tRNA ligase.